The following is a 505-amino-acid chain: Deoxyguanosinetriphosphate triphosphohydrolase (505 aa).

The 208-residue stretch at 66–273 (RLTHSMEVQQ…MEAADDISYC (208 aa)) folds into the HD domain.

This sequence belongs to the dGTPase family. Type 1 subfamily. As to quaternary structure, homotetramer. It depends on Mg(2+) as a cofactor.

The catalysed reaction is dGTP + H2O = 2'-deoxyguanosine + triphosphate + H(+). DGTPase preferentially hydrolyzes dGTP over the other canonical NTPs. The polypeptide is Deoxyguanosinetriphosphate triphosphohydrolase (Escherichia coli O17:K52:H18 (strain UMN026 / ExPEC)).